Consider the following 1221-residue polypeptide: DNA-directed RNA polymerase subunit beta (1221 aa).

The disordered stretch occupies residues 1176 to 1221 (EKKKLAEEEAEIAAEAEAEGSAEEDAAEADADANEAETADDDKASK). Positions 1183-1215 (EEAEIAAEAEAEGSAEEDAAEADADANEAETAD) are enriched in acidic residues.

Belongs to the RNA polymerase beta chain family. In terms of assembly, the RNAP catalytic core consists of 2 alpha, 1 beta, 1 beta' and 1 omega subunit. When a sigma factor is associated with the core the holoenzyme is formed, which can initiate transcription.

It catalyses the reaction RNA(n) + a ribonucleoside 5'-triphosphate = RNA(n+1) + diphosphate. In terms of biological role, DNA-dependent RNA polymerase catalyzes the transcription of DNA into RNA using the four ribonucleoside triphosphates as substrates. This chain is DNA-directed RNA polymerase subunit beta, found in Lactobacillus delbrueckii subsp. bulgaricus (strain ATCC BAA-365 / Lb-18).